A 312-amino-acid chain; its full sequence is Iron/alpha-ketoglutarate-dependent dioxygenase penM (312 aa).

Residues His134, Asp136, and His211 each contribute to the Fe cation site. The disordered stretch occupies residues 287 to 312 (LGLKSEQPLPDGMEKGSMQETDIGGQ).

Belongs to the PhyH family. As to quaternary structure, homodimer. Requires Fe cation as cofactor.

The enzyme catalyses (-)-cyclopeptine + 2-oxoglutarate + O2 = (Z)-dehydrocyclopeptine + succinate + CO2 + H2O. It carries out the reaction (Z)-dehydrocyclopeptine + 2-oxoglutarate + O2 = (-)-cyclopenine + succinate + CO2. It catalyses the reaction (-)-4'-methoxycyclopeptine + 2-oxoglutarate + O2 = (Z)-4'-methoxydehydrocyclopeptine + succinate + CO2 + H2O. The catalysed reaction is (Z)-4'-methoxydehydrocyclopeptine + 2-oxoglutarate + O2 = (-)-4'-methoxycyclopenine + succinate + CO2. It functions in the pathway secondary metabolite biosynthesis. It participates in alkaloid biosynthesis. Its pathway is mycotoxin biosynthesis. Its function is as follows. Iron/alpha-ketoglutarate-dependent dioxygenase; part of the gene cluster that mediates the biosynthesis of penigequinolones, potent insecticidal alkaloids that contain a highly modified 10-carbon prenyl group. The first stage is catalyzed by the nonribosomal peptide synthetase penN that condenses anthranilic acid and O-methyl-L-tyrosine to produce 4'-methoxycyclopeptin. 4'-methoxycyclopeptin is then converted to 4'-methoxydehydrocyclopeptin by the ketoglutarate-dependent dioxygenase penM through dehydrogenation to form a double bond between C-alpha and C-beta of the O-methyltyrosine side chain. PenM also converts its first product methoxydehydrocyclopeptin to 4'-methoxycyclopenin. The following conversion of 4'methoxycyclopenin into 4'-methoxyviridicatin is catalyzed by the cyclopenase penL. 4'-methoxyviridicatin is the precursor of quinolone natural products, and is further converted to quinolinone B. The prenyltransferase penI then catalyzes the canonical Friedel-Crafts alkylation of quinolinone B with dimethylallyl cation to yield dimethylallyl quinolone, which is subjected to FAD-dependent dehydrogenation by the FAD-linked oxidoreductase penH to yield conjugated aryl diene. The delta(3') double bond then serves as the site of the second alkylation with DMAPP catalyzed by the prenyltransferase penG to yield a carbenium ion intermediate, which can be attacked by H(2)O to yield a styrenyl quinolone containing a C3'-hydroxyprenyl chain, or undergo cyclization to yield yaequinolones J1 and J2. The conversion of the styrenyl quinolone into the tetrahydrofuran-containing yaequinolone C is performed by the FAD-dependent monooxygenase penE and involves epoxidation of the terminal C7'-C8' olefin, followed by epoxide ring opening initiated by the C3' hydroxyl group. The predicted cysteine hydrolase penJ acts as an epoxide hydrolase that enhances the rate of the 5-exo-tet cyclization step, increasing the yield of yaequinolone C. PenF catalyzes the cationic rearrangement of the epoxide formed by penE (before ring opening to produce yaequinolone C) into yaequinolone D. Finally, the short-chain dehydrogenase/reductase (SDR)-like reductase penD, catalyzes both the dehydration of yaequinolone D and the reduction of the resulting oxonium to yield penigequinolone. In Penicillium thymicola, this protein is Iron/alpha-ketoglutarate-dependent dioxygenase penM.